Here is a 138-residue protein sequence, read N- to C-terminus: Transcription antitermination protein NusB (138 aa).

This sequence belongs to the NusB family.

Its function is as follows. Involved in transcription antitermination. Required for transcription of ribosomal RNA (rRNA) genes. Binds specifically to the boxA antiterminator sequence of the ribosomal RNA (rrn) operons. The sequence is that of Transcription antitermination protein NusB from Desulforudis audaxviator (strain MP104C).